Consider the following 237-residue polypeptide: Purine nucleoside phosphorylase DeoD-type (237 aa).

Residue histidine 4 participates in a purine D-ribonucleoside binding. Phosphate is bound by residues glycine 20, arginine 24, arginine 43, and arginine 87–threonine 90. Residues glutamate 179–glutamate 181 and serine 203–aspartate 204 each bind a purine D-ribonucleoside. Aspartate 204 acts as the Proton donor in catalysis.

This sequence belongs to the PNP/UDP phosphorylase family. Homohexamer; trimer of homodimers.

The enzyme catalyses a purine D-ribonucleoside + phosphate = a purine nucleobase + alpha-D-ribose 1-phosphate. The catalysed reaction is a purine 2'-deoxy-D-ribonucleoside + phosphate = a purine nucleobase + 2-deoxy-alpha-D-ribose 1-phosphate. In terms of biological role, catalyzes the reversible phosphorolytic breakdown of the N-glycosidic bond in the beta-(deoxy)ribonucleoside molecules, with the formation of the corresponding free purine bases and pentose-1-phosphate. The sequence is that of Purine nucleoside phosphorylase DeoD-type from Streptococcus gordonii (strain Challis / ATCC 35105 / BCRC 15272 / CH1 / DL1 / V288).